A 513-amino-acid polypeptide reads, in one-letter code: Xylose import ATP-binding protein XylG (513 aa).

2 ABC transporter domains span residues 5–242 and 259–505; these read LEMK…VGRE and LRIE…LRSE. 37–44 provides a ligand contact to ATP; the sequence is GENGSGKS.

Belongs to the ABC transporter superfamily. Xylose importer (TC 3.A.1.2.4) family. The complex is composed of two ATP-binding proteins (XylG), two transmembrane proteins (XylH) and a solute-binding protein (XylF).

The protein localises to the cell inner membrane. It catalyses the reaction D-xylose(out) + ATP + H2O = D-xylose(in) + ADP + phosphate + H(+). Its function is as follows. Part of the ABC transporter complex XylFGH involved in xylose import. Responsible for energy coupling to the transport system. The polypeptide is Xylose import ATP-binding protein XylG (Escherichia coli (strain UTI89 / UPEC)).